Reading from the N-terminus, the 1058-residue chain is Ubiquitin-like modifier-activating enzyme 1 (1058 aa).

The tract at residues 1 to 46 (MSSSPLSKKRRVSGPDPKPGSNCSPAQSALSEVSSVPTNGMAKNGS) is disordered. Ser-2 carries the post-translational modification N-acetylserine. Phosphoserine occurs at positions 4, 13, 21, 24, and 46. The segment covering 21–38 (SNCSPAQSALSEVSSVPT) has biased composition (polar residues). Tyr-55 bears the Phosphotyrosine mark. A run of 2 repeats spans residues 63–199 (GHEA…GQLF) and 459–611 (GSDF…QVVI). Residues 63-611 (GHEAMKMLQT…GTKGNVQVVI (549 aa)) form a 2 approximate repeats region. ATP is bound by residues Ala-478, Asp-504, Arg-515, Lys-528, and 576–577 (DN). Position 528 is an N6-succinyllysine (Lys-528). Cys-632 serves as the catalytic Glycyl thioester intermediate. The residue at position 671 (Lys-671) is an N6-acetyllysine. The residue at position 800 (Thr-800) is a Phosphothreonine. A phosphoserine mark is found at Ser-810, Ser-816, Ser-820, and Ser-835. Lys-980 carries the post-translational modification N6-acetyllysine.

It belongs to the ubiquitin-activating E1 family. Monomer. Interacts with GAN (via BTB domain). Post-translationally, ISGylated. In terms of tissue distribution, ubiquitously expressed. In testis, expressed in A spermatogonia and spermatids but at very low levels in pachytene spermatocytes.

The protein localises to the cytoplasm. It localises to the mitochondrion. The protein resides in the nucleus. It carries out the reaction ATP + ubiquitin + [E1 ubiquitin-activating enzyme]-L-cysteine = AMP + diphosphate + S-ubiquitinyl-[E1 ubiquitin-activating enzyme]-L-cysteine.. Its pathway is protein modification; protein ubiquitination. In terms of biological role, catalyzes the first step in ubiquitin conjugation to mark cellular proteins for degradation through the ubiquitin-proteasome system. Activates ubiquitin by first adenylating its C-terminal glycine residue with ATP, and thereafter linking this residue to the side chain of a cysteine residue in E1, yielding a ubiquitin-E1 thioester and free AMP. Essential for the formation of radiation-induced foci, timely DNA repair and for response to replication stress. Promotes the recruitment of TP53BP1 and BRCA1 at DNA damage sites. The chain is Ubiquitin-like modifier-activating enzyme 1 (Uba1) from Mus musculus (Mouse).